The following is a 699-amino-acid chain: eEF1A lysine and N-terminal methyltransferase (699 aa).

Met-1 bears the N-acetylmethionine mark. Ser-267 carries the phosphoserine modification. The interval 433–460 (VSHRAQKKRKKDRKKHRPADTPEDLPAA) is disordered. The segment covering 436-449 (RAQKKRKKDRKKHR) has biased composition (basic residues).

Belongs to the methyltransferase superfamily. In terms of assembly, forms a tripartite complex containing GAB1, METTL13 and SPRY2. Within the complex interacts with GAB1 and SPRY2.

The protein localises to the cytoplasm. It localises to the nucleus. The protein resides in the mitochondrion. The catalysed reaction is L-lysyl-[protein] + S-adenosyl-L-methionine = N(6)-methyl-L-lysyl-[protein] + S-adenosyl-L-homocysteine + H(+). It carries out the reaction N(6)-methyl-L-lysyl-[protein] + S-adenosyl-L-methionine = N(6),N(6)-dimethyl-L-lysyl-[protein] + S-adenosyl-L-homocysteine + H(+). The enzyme catalyses N-terminal glycyl-L-lysyl-L-glutamyl-[protein] + 3 S-adenosyl-L-methionine = N-terminal N,N,N-trimethyl-glycyl-L-lysyl-L-glutamyl-[protein] + 3 S-adenosyl-L-homocysteine + 3 H(+). Dual methyltransferase that catalyzes methylation of elongation factor 1-alpha (EEF1A1 and EEF1A2) at two different positions, and is therefore involved in the regulation of mRNA translation. Via its C-terminus, methylates EEF1A1 and EEF1A2 at the N-terminal residue 'Gly-2'. Via its N-terminus dimethylates EEF1A1 and EEF1A2 at residue 'Lys-55'. Has no activity towards core histones H2A, H2B, H3 and H4. In Bos taurus (Bovine), this protein is eEF1A lysine and N-terminal methyltransferase (METTL13).